The following is a 146-amino-acid chain: Prostaglandin E synthase 3 (146 aa).

In terms of domain architecture, CS spans 1–76; sequence VFIEFCVEDS…ESGQAWPRLT (76 aa). The tract at residues 110 to 146 is disordered; it reads SEMMNNMGGDDDVDLPEVDGADDDSPDSDDEKMPDLE. Positions 118–139 are enriched in acidic residues; that stretch reads GDDDVDLPEVDGADDDSPDSDD.

It belongs to the p23/wos2 family. Binds to telomerase. Binds to the progesterone receptor.

The protein resides in the cytoplasm. The catalysed reaction is prostaglandin H2 = prostaglandin E2. It participates in lipid metabolism; prostaglandin biosynthesis. Its function is as follows. Molecular chaperone. This Gallus gallus (Chicken) protein is Prostaglandin E synthase 3 (PTGES3).